A 96-amino-acid chain; its full sequence is Co-chaperonin GroES (96 aa).

The protein belongs to the GroES chaperonin family. In terms of assembly, heptamer of 7 subunits arranged in a ring. Interacts with the chaperonin GroEL.

Its subcellular location is the cytoplasm. Its function is as follows. Together with the chaperonin GroEL, plays an essential role in assisting protein folding. The GroEL-GroES system forms a nano-cage that allows encapsulation of the non-native substrate proteins and provides a physical environment optimized to promote and accelerate protein folding. GroES binds to the apical surface of the GroEL ring, thereby capping the opening of the GroEL channel. The chain is Co-chaperonin GroES from Wolbachia pipientis wMel.